We begin with the raw amino-acid sequence, 648 residues long: Spastin (648 aa).

The Cytoplasmic segment spans residues 1–40 (MASTVALLRDSSDDRENFDDGETDCVQVGRKRKLTVFFYP). Residues 41-61 (LLLVFWLLRWVFYQFFLVLCF) constitute an intramembrane region (helical). At 62 to 648 (VCRGFVPRRH…WNREFGDITV (587 aa)) the chain is on the cytoplasmic side. The region spanning 99 to 174 (HKKAFDFISK…EMARDRLDFL (76 aa)) is the MIT domain. The segment at 188 to 346 (PWHGGVAPAQ…SQRSLLSSRV (159 aa)) is disordered. The segment covering 247-266 (TGVTLRRQQQQQLGGVSTVS) has biased composition (low complexity). Residue 414 to 421 (GPPGNGKT) coordinates ATP.

Belongs to the AAA ATPase family. Spastin subfamily. Homohexamer. The homohexamer is stabilized by ATP-binding. The homohexamer may adopt a ring conformation through which microtubules pass prior to being severed. Interacts with microtubules.

Its subcellular location is the membrane. The protein resides in the cytoplasm. It is found in the cytoskeleton. The protein localises to the microtubule organizing center. It localises to the centrosome. It carries out the reaction n ATP + n H2O + a microtubule = n ADP + n phosphate + (n+1) alpha/beta tubulin heterodimers.. Its function is as follows. ATP-dependent microtubule severing protein. Microtubule severing may promote reorganization of cellular microtubule arrays and the release of microtubules from the microtubule organizing center following nucleation. This Ixodes scapularis (Black-legged tick) protein is Spastin (spas).